A 404-amino-acid polypeptide reads, in one-letter code: uncharacterized protein (404 aa).

[4Fe-4S] cluster-binding residues include Cys69, Cys75, Cys78, and Cys166. 4 residues coordinate S-adenosyl-L-methionine: Gln226, Tyr253, Glu274, and Asp334. Cys361 acts as the Nucleophile in catalysis.

This sequence belongs to the class I-like SAM-binding methyltransferase superfamily. RNA M5U methyltransferase family.

This is an uncharacterized protein from Treponema denticola (strain ATCC 35405 / DSM 14222 / CIP 103919 / JCM 8153 / KCTC 15104).